The primary structure comprises 1342 residues: DNA-directed RNA polymerase subunit beta (1342 aa).

It belongs to the RNA polymerase beta chain family. In terms of assembly, the RNAP catalytic core consists of 2 alpha, 1 beta, 1 beta' and 1 omega subunit. When a sigma factor is associated with the core the holoenzyme is formed, which can initiate transcription.

It catalyses the reaction RNA(n) + a ribonucleoside 5'-triphosphate = RNA(n+1) + diphosphate. Functionally, DNA-dependent RNA polymerase catalyzes the transcription of DNA into RNA using the four ribonucleoside triphosphates as substrates. This Serratia proteamaculans (strain 568) protein is DNA-directed RNA polymerase subunit beta.